Reading from the N-terminus, the 181-residue chain is Beta-lactoglobulin-2 (181 aa).

The first 18 residues, 1–18 (MKCLLLALGLSLMCGNQA), serve as a signal peptide directing secretion. Disulfide bonds link cysteine 84–cysteine 179 and cysteine 124–cysteine 138.

It belongs to the calycin superfamily. Lipocalin family. Monomer.

The protein localises to the secreted. Its function is as follows. Lactoglobulin is the primary component of whey, it binds retinol and is probably involved in the transport of that molecule. This is Beta-lactoglobulin-2 (LGB2) from Equus caballus (Horse).